The primary structure comprises 72 residues: Protein Kish (72 aa).

A signal peptide spans Met-1–Gly-26. Residues Gln-27–Arg-53 lie on the Lumenal side of the membrane. A helical membrane pass occupies residues Ala-54 to Ser-72.

This sequence belongs to the KISH family.

The protein localises to the endoplasmic reticulum membrane. Its subcellular location is the golgi apparatus membrane. Involved in the early part of the secretory pathway. The chain is Protein Kish from Saccharomyces cerevisiae (strain ATCC 204508 / S288c) (Baker's yeast).